The sequence spans 89 residues: Large ribosomal subunit protein bL31B (89 aa).

A disordered region spans residues Arg70–Gly89.

It belongs to the bacterial ribosomal protein bL31 family. Type B subfamily. Part of the 50S ribosomal subunit.

This is Large ribosomal subunit protein bL31B from Rubrobacter xylanophilus (strain DSM 9941 / JCM 11954 / NBRC 16129 / PRD-1).